Consider the following 581-residue polypeptide: MESLLCRRRIKRVMVLIIALTWLRSTCGELEDQLFEVGKLKMFVDDLPDMPRLYGFNSVHGIIKPASLQIGMFSTKWKFHRDLPATPVFAYGTSRSKATVPGPTIETVYGVDTYVTWRNHLPKSHILPWDPTISPATPKHGGIPTVVHLHGGIHEPTSDGNADAWFTAGFRETGPKWTKTTLHYENKQQPGNMWYHDHAMGLTRVNLLAGLVGAYILRHHAVESPFQLPTGDEFDRPLIIFDRSFRKDGSIYMNATGNNPSIHPQWQPEYFGDVIIVNGKAWPRLNVRRRKYRFRIINASNARFFKFFFSNGLDFIVVGSDSAYLSKPVMTKSILLSPSEIVDVVVDFYKSPSRTVVLANDAPYPYPSGDPVNEENGKVMKFIINNESEDDTCTIPKKLINYPNADVSNAVLTRYISMYEYVSNSDEPTHLLVNGLPYEAPVTETPKSGTTEVWEVINLTEDNHPLHIHLGLFKVVEQTALLAAGLEEFKECMTKQNDAVKCQISKYARGKKTAVTAHERGWKNVFKMMPGHVTRILVRFSYIHTNASYPFDPTQEPGYVYHCHILDHEDNMMMRPLKVII.

An N-terminal signal peptide occupies residues M1–G28. H148, H150, H196, and H198 together coordinate Cu cation. 4 N-linked (GlcNAc...) asparagine glycosylation sites follow: N254, N298, N386, and N458. The region spanning P283–P352 is the Plastocyanin-like domain. 3 residues coordinate Cu cation: H464, H467, and H469. N546 carries N-linked (GlcNAc...) asparagine glycosylation. 5 residues coordinate Cu cation: H562, C563, H564, H568, and M573.

This sequence belongs to the multicopper oxidase family. Cu cation is required as a cofactor.

Its subcellular location is the endoplasmic reticulum membrane. Functionally, multicopper oxidase that may be involved in copper homeostasis and oxidative stress response, and that is necessary for root growth inhibition by low phosphate conditions. Functions together with LPR2 and PDR2 in a common pathway that adjusts root meristem activity to phosphate availability. Oxidizes the substrate 2,2'-azinobis-(3-ethylbenzthiazoline-6-sulphonate) in vitro. This Arabidopsis thaliana (Mouse-ear cress) protein is Multicopper oxidase LPR1 (LPR1).